The sequence spans 863 residues: Protein translocase subunit SecA (863 aa).

Residues Gln-88, 106–110, and Asp-507 each bind ATP; that span reads GEGKT. Residues 806-863 form a disordered region; the sequence is KSHEQNEQFLSNTTESGVNENGEAQITKVPRNSPCPCGSGKKYKECHGKSGPKKGILA. The segment covering 812-829 has biased composition (polar residues); sequence EQFLSNTTESGVNENGEA. Cys-840, Cys-842, Cys-851, and His-852 together coordinate Zn(2+).

This sequence belongs to the SecA family. In terms of assembly, monomer and homodimer. Part of the essential Sec protein translocation apparatus which comprises SecA, SecYEG and auxiliary proteins SecDF-YajC and YidC. It depends on Zn(2+) as a cofactor.

Its subcellular location is the cell inner membrane. It is found in the cytoplasm. The enzyme catalyses ATP + H2O + cellular proteinSide 1 = ADP + phosphate + cellular proteinSide 2.. In terms of biological role, part of the Sec protein translocase complex. Interacts with the SecYEG preprotein conducting channel. Has a central role in coupling the hydrolysis of ATP to the transfer of proteins into and across the cell membrane, serving as an ATP-driven molecular motor driving the stepwise translocation of polypeptide chains across the membrane. This chain is Protein translocase subunit SecA, found in Campylobacter lari (strain RM2100 / D67 / ATCC BAA-1060).